The following is a 184-amino-acid chain: Photosystem I assembly protein Ycf4 (184 aa).

The next 2 membrane-spanning stretches (helical) occupy residues 21–43 (NFFW…SSSY) and 58–80 (VFIP…GFYL).

The protein belongs to the Ycf4 family.

The protein resides in the plastid. It localises to the chloroplast thylakoid membrane. Seems to be required for the assembly of the photosystem I complex. The chain is Photosystem I assembly protein Ycf4 from Psilotum nudum (Whisk fern).